Consider the following 399-residue polypeptide: Beta sliding clamp (399 aa).

The protein belongs to the beta sliding clamp family. Forms a ring-shaped head-to-tail homodimer around DNA which binds and tethers DNA polymerases and other proteins to the DNA. The DNA replisome complex has a single clamp-loading complex (3 tau and 1 each of delta, delta', psi and chi subunits) which binds 3 Pol III cores (1 core on the leading strand and 2 on the lagging strand) each with a beta sliding clamp dimer. Additional proteins in the replisome are other copies of gamma, psi and chi, Ssb, DNA helicase and RNA primase.

It localises to the cytoplasm. In terms of biological role, confers DNA tethering and processivity to DNA polymerases and other proteins. Acts as a clamp, forming a ring around DNA (a reaction catalyzed by the clamp-loading complex) which diffuses in an ATP-independent manner freely and bidirectionally along dsDNA. Initially characterized for its ability to contact the catalytic subunit of DNA polymerase III (Pol III), a complex, multichain enzyme responsible for most of the replicative synthesis in bacteria; Pol III exhibits 3'-5' exonuclease proofreading activity. The beta chain is required for initiation of replication as well as for processivity of DNA replication. The chain is Beta sliding clamp (dnaN) from Mycolicibacterium paratuberculosis (strain ATCC BAA-968 / K-10) (Mycobacterium paratuberculosis).